We begin with the raw amino-acid sequence, 947 residues long: Serine-aspartate repeat-containing protein C (947 aa).

A signal peptide spans 1-50 (MNNKKTATNRKGMIPNRLNKFSIRKYSVGTASILVGTTLIFGLSGHEAKA). A YSIRK-G/S signaling motif motif is present at residues 21-32 (FSIRKYSVGTAS). The tract at residues 51-164 (AEHTNGELNQ…STTPKTTTIK (114 aa)) is disordered. The interval 51 to 495 (AEHTNGELNQ…GSSTANGDQK (445 aa)) is ligand binding A region. The segment covering 56-71 (GELNQSKNETTAPSEN) has biased composition (polar residues). Positions 72–83 (KTTKKVDSRQLK) are enriched in basic and acidic residues. Positions 84-155 (DNTQTATADQ…SNLTQAKDVS (72 aa)) are enriched in polar residues. CNA-B domains lie at 496 to 606 (KYNL…YKTP) and 607 to 717 (KYSL…EEET). Residues 678–927 (TQTGTNTTED…NNSNNGTLFG (250 aa)) form a disordered region. Composition is skewed to acidic residues over residues 685–695 (TEDDKDADGGE) and 712–886 (YYEE…DSDS). Residues 910-914 (LPETG) carry the LPXTG sorting signal motif. Residues 912 to 927 (ETGSENNNSNNGTLFG) show a composition bias toward low complexity. A Pentaglycyl murein peptidoglycan amidated threonine modification is found at Thr-913. Residues 914–947 (GSENNNSNNGTLFGGLFAALGSLLLFGRRKKQNK) constitute a propeptide, removed by sortase.

It belongs to the serine-aspartate repeat-containing protein (SDr) family. As to quaternary structure, homodimerizes; via N2-Domain. Interacts with host NRXN1; this interaction mediates bacterial attachment to host cells.

It is found in the secreted. Its subcellular location is the cell wall. Functionally, cell surface-associated calcium-binding protein which plays an important role in adhesion and pathogenesis. Mediates interactions with components of the extracellular matrix such as host NRXN1 to promote bacterial adhesion. This Staphylococcus aureus (strain Newman) protein is Serine-aspartate repeat-containing protein C (sdrC).